The primary structure comprises 175 residues: Keratin-associated protein 13-2 (175 aa).

A run of 5 repeats spans residues 46 to 55 (CQLGSSLYRG), 56 to 65 (CQEICWEPTS), 66 to 75 (CQTSYVESSP), 76 to 85 (CQTSCYRPRT), and 92 to 101 (CKTTYSGSLG). A 5 X 10 AA approximate repeats region spans residues 46–101 (CQLGSSLYRGCQEICWEPTSCQTSYVESSPCQTSCYRPRTSLLCSPCKTTYSGSLG).

The protein belongs to the PMG family. In terms of assembly, interacts with hair keratins.

Functionally, in the hair cortex, hair keratin intermediate filaments are embedded in an interfilamentous matrix, consisting of hair keratin-associated proteins (KRTAP), which are essential for the formation of a rigid and resistant hair shaft through their extensive disulfide bond cross-linking with abundant cysteine residues of hair keratins. The matrix proteins include the high-sulfur and high-glycine-tyrosine keratins. This is Keratin-associated protein 13-2 (KRTAP13-2) from Homo sapiens (Human).